We begin with the raw amino-acid sequence, 274 residues long: NAD(P)H dehydrogenase [quinone] 1 (274 aa).

Ala-2 carries the post-translational modification N-acetylalanine. FAD-binding positions include His-12, 18–19, and Gln-67; that span reads FN. Ser-82 carries the post-translational modification Phosphoserine. Residue 104–107 coordinates FAD; that stretch reads LYWF. Residue 126–128 coordinates substrate; that stretch reads AYT. FAD is bound by residues 148–151, Tyr-156, and Arg-201; that span reads TTGG. The tract at residues 225–274 is important for apoenzyme conformational stability; sequence PSSLFDLNFQAGFLLKKEVQEEQKKNKFGLSVGHHLGKSIPADNQIKARK. Lys-251 participates in a covalent cross-link: Glycyl lysine isopeptide (Lys-Gly) (interchain with G-Cter in SUMO2).

The protein belongs to the NAD(P)H dehydrogenase (quinone) family. As to quaternary structure, homodimer. Interacts with PDLIM4 isoform 2; this interaction stabilizes PDLIM4 isoform 2 in response to oxidative stress and protects it from ubiquitin-independent degradation by the core 20S proteasome. Interacts with TP73 (via SAM domain); this interaction is NADH-dependent, stabilizes TP73 in response to oxidative stress and protects it from ubiquitin-independent degradation by the 20S proteasome. Interacts with TP53; this interaction is NADH-dependent, stabilizes TP53 in response to oxidative stress and protects it from ubiquitin-independent degradation by the 20S proteasome. The cofactor is FAD.

It is found in the cytoplasm. The protein resides in the cytosol. It catalyses the reaction a quinone + NADH + H(+) = a quinol + NAD(+). The catalysed reaction is a quinone + NADPH + H(+) = a quinol + NADP(+). It carries out the reaction ubiquinone-10 + NADH + H(+) = ubiquinol-10 + NAD(+). The enzyme catalyses menadione + NADH + H(+) = menadiol + NAD(+). Functionally, flavin-containing quinone reductase that catalyzes two-electron reduction of quinones to hydroquinones using either NADH or NADPH as electron donors. In a ping-pong kinetic mechanism, the electrons are sequentially transferred from NAD(P)H to flavin cofactor and then from reduced flavin to the quinone, bypassing the formation of semiquinone and reactive oxygen species. Regulates cellular redox state primarily through quinone detoxification. Reduces components of plasma membrane redox system such as coenzyme Q and vitamin quinones, producing antioxidant hydroquinone forms. In the process may function as superoxide scavenger to prevent hydroquinone oxidation and facilitate excretion. Alternatively, can activate quinones and their derivatives by generating redox reactive hydroquinones with DNA cross-linking antitumor potential. Acts as a gatekeeper of the core 20S proteasome known to degrade proteins with unstructured regions. Upon oxidative stress, interacts with tumor suppressors TP53 and TP73 in a NADH-dependent way and inhibits their ubiquitin-independent degradation by the 20S proteasome. The sequence is that of NAD(P)H dehydrogenase [quinone] 1 (Nqo1) from Rattus norvegicus (Rat).